The primary structure comprises 825 residues: Probable inorganic carbon transporter subunit DabA (825 aa).

Residues cysteine 334, aspartate 336, histidine 521, and cysteine 536 each contribute to the Zn(2+) site.

The protein belongs to the inorganic carbon transporter (TC 9.A.2) DabA family. As to quaternary structure, forms a complex with DabB. It depends on Zn(2+) as a cofactor.

Its subcellular location is the cell inner membrane. Its function is as follows. Part of an energy-coupled inorganic carbon pump. This is Probable inorganic carbon transporter subunit DabA from Acidithiobacillus ferrooxidans (strain ATCC 23270 / DSM 14882 / CIP 104768 / NCIMB 8455) (Ferrobacillus ferrooxidans (strain ATCC 23270)).